The sequence spans 237 residues: Ribonuclease PH (237 aa).

Residues Arg-86 and 124–126 (GTR) contribute to the phosphate site.

Belongs to the RNase PH family. As to quaternary structure, homohexameric ring arranged as a trimer of dimers.

It catalyses the reaction tRNA(n+1) + phosphate = tRNA(n) + a ribonucleoside 5'-diphosphate. In terms of biological role, phosphorolytic 3'-5' exoribonuclease that plays an important role in tRNA 3'-end maturation. Removes nucleotide residues following the 3'-CCA terminus of tRNAs; can also add nucleotides to the ends of RNA molecules by using nucleoside diphosphates as substrates, but this may not be physiologically important. Probably plays a role in initiation of 16S rRNA degradation (leading to ribosome degradation) during starvation. The protein is Ribonuclease PH of Bradyrhizobium diazoefficiens (strain JCM 10833 / BCRC 13528 / IAM 13628 / NBRC 14792 / USDA 110).